Reading from the N-terminus, the 96-residue chain is uncharacterized protein (96 aa).

The signal sequence occupies residues 1–21; sequence MLASVLILGAIAVGSAIPTIA.

This is an uncharacterized protein from Archaeoglobus fulgidus (strain ATCC 49558 / DSM 4304 / JCM 9628 / NBRC 100126 / VC-16).